The following is a 209-amino-acid chain: Thymidylate kinase (209 aa).

Gly-10 to Thr-17 contacts ATP.

The protein belongs to the thymidylate kinase family.

It catalyses the reaction dTMP + ATP = dTDP + ADP. Functionally, phosphorylation of dTMP to form dTDP in both de novo and salvage pathways of dTTP synthesis. The protein is Thymidylate kinase of Anoxybacillus flavithermus (strain DSM 21510 / WK1).